The following is a 414-amino-acid chain: Probable tRNA pseudouridine synthase D (414 aa).

Catalysis depends on aspartate 90, which acts as the Nucleophile. Positions 162-382 (GFPNFFGVQR…SSGDYRIISA (221 aa)) constitute a TRUD domain.

This sequence belongs to the pseudouridine synthase TruD family.

The catalysed reaction is uridine(13) in tRNA = pseudouridine(13) in tRNA. In terms of biological role, could be responsible for synthesis of pseudouridine from uracil-13 in transfer RNAs. This chain is Probable tRNA pseudouridine synthase D, found in Picrophilus torridus (strain ATCC 700027 / DSM 9790 / JCM 10055 / NBRC 100828 / KAW 2/3).